A 226-amino-acid polypeptide reads, in one-letter code: Probable chemoreceptor glutamine deamidase CheD (226 aa).

Residues 207-226 (PGGMRVERFDTPSRRDPVGA) form a disordered region.

It belongs to the CheD family.

It catalyses the reaction L-glutaminyl-[protein] + H2O = L-glutamyl-[protein] + NH4(+). Its function is as follows. Probably deamidates glutamine residues to glutamate on methyl-accepting chemotaxis receptors (MCPs), playing an important role in chemotaxis. This is Probable chemoreceptor glutamine deamidase CheD from Bordetella bronchiseptica (strain ATCC BAA-588 / NCTC 13252 / RB50) (Alcaligenes bronchisepticus).